We begin with the raw amino-acid sequence, 326 residues long: Ornithine carbamoyltransferase (326 aa).

Residues Ser54–Thr57, Gln81, Arg105, and His132–Gln135 each bind carbamoyl phosphate. L-ornithine contacts are provided by residues Asn164, Asp225, and Ser229–Met230. Carbamoyl phosphate-binding positions include Cys266–Leu267 and Arg311.

This sequence belongs to the aspartate/ornithine carbamoyltransferase superfamily. OTCase family.

Its subcellular location is the cytoplasm. It carries out the reaction carbamoyl phosphate + L-ornithine = L-citrulline + phosphate + H(+). The protein operates within amino-acid biosynthesis; L-arginine biosynthesis; L-arginine from L-ornithine and carbamoyl phosphate: step 1/3. Its function is as follows. Reversibly catalyzes the transfer of the carbamoyl group from carbamoyl phosphate (CP) to the N(epsilon) atom of ornithine (ORN) to produce L-citrulline. The sequence is that of Ornithine carbamoyltransferase (argF) from Streptococcus mutans serotype c (strain ATCC 700610 / UA159).